The primary structure comprises 173 residues: Co-chaperone protein HscB homolog (173 aa).

The J domain occupies 3–75 (NPFSLFNLPV…IARATAIIEI (73 aa)).

Belongs to the HscB family. In terms of assembly, interacts with HscA and stimulates its ATPase activity.

Functionally, co-chaperone involved in the maturation of iron-sulfur cluster-containing proteins. Seems to help targeting proteins to be folded toward HscA. The sequence is that of Co-chaperone protein HscB homolog from Haemophilus ducreyi (strain 35000HP / ATCC 700724).